A 289-amino-acid polypeptide reads, in one-letter code: Cell division protein ZipA (289 aa).

Residue Met1 is a topological domain, periplasmic. A helical membrane pass occupies residues 2–22; sequence DIGLREWLIVIGLIVIAGILF. Over 23-289 the chain is Cytoplasmic; the sequence is DGWRRMRGGK…HERRSLMQKR (267 aa). Positions 65-141 are disordered; that stretch reads HREPSFDEQD…KEREKAPAVA (77 aa). Over residues 81-99 the composition is skewed to basic and acidic residues; sequence RETKERKGGKRQEEPRQGD. Residues 100 to 114 are compositionally biased toward acidic residues; it reads LDLDEGLALEADPSD.

This sequence belongs to the ZipA family. Interacts with FtsZ via their C-terminal domains.

The protein localises to the cell inner membrane. Essential cell division protein that stabilizes the FtsZ protofilaments by cross-linking them and that serves as a cytoplasmic membrane anchor for the Z ring. Also required for the recruitment to the septal ring of downstream cell division proteins. The sequence is that of Cell division protein ZipA from Pseudomonas aeruginosa (strain UCBPP-PA14).